We begin with the raw amino-acid sequence, 838 residues long: Alpha-glucan phosphorylase, H isozyme (838 aa).

A disordered region spans residues 1–21; it reads MEGGAKSNDVSAAPIAQPLSE. An N6-(pyridoxal phosphate)lysine modification is found at K684.

This sequence belongs to the glycogen phosphorylase family. It depends on pyridoxal 5'-phosphate as a cofactor.

It localises to the cytoplasm. It carries out the reaction [(1-&gt;4)-alpha-D-glucosyl](n) + phosphate = [(1-&gt;4)-alpha-D-glucosyl](n-1) + alpha-D-glucose 1-phosphate. In terms of biological role, phosphorylase is an important allosteric enzyme in carbohydrate metabolism. Enzymes from different sources differ in their regulatory mechanisms and in their natural substrates. However, all known phosphorylases share catalytic and structural properties. This chain is Alpha-glucan phosphorylase, H isozyme, found in Solanum tuberosum (Potato).